The sequence spans 417 residues: Ankyrin repeat and SAM domain-containing protein 4B (417 aa).

A mediates localization to microvilli region spans residues 1 to 252 (MSTRYHQAAS…SGDFKEKLQL (252 aa)). ANK repeat units follow at residues 31 to 60 (DGMT…DPDR), 64 to 93 (WGNT…NIFA), and 97 to 126 (DLQT…AQNI). The stretch at 130–164 (KKVTRLKEQAQKNARRQIKECERLQEKHQNKMAHT) forms a coiled coil. The disordered stretch occupies residues 151-195 (ERLQEKHQNKMAHTYSKEESGTLSSSKGTFSRSSPSNASAPGTFG). Residues 171 to 190 (GTLSSSKGTFSRSSPSNASA) show a composition bias toward polar residues. Positions 253–346 (SAEEDGSVHH…EWEEDVVDAT (94 aa)) are mediates interaction with MYO7B. A Phosphoserine modification is found at serine 283. The segment at 305-330 (RQGASEADEGAADEEGEENGLKDDLP) is disordered. Residues 310-322 (EADEGAADEEGEE) show a composition bias toward acidic residues. The 53-residue stretch at 351–403 (FLLSQHLEEFLPIFKREQIDLEALLLCSDEDLQSIQMQLGPRKKVLNAINRRK) folds into the SAM domain. The short motif at 415 to 417 (TSL) is the PDZ-binding; mediates interaction with USH1C element.

Part of the IMAC/intermicrovillar adhesion complex/intermicrovillar tip-link complex composed of ANKS4B, MYO7B, USH1C, CDHR2 and CDHR5. Interacts with USH1C; the interaction is direct and is required for ANKS4B localization to the tip of microvilli. Interacts with MYO7B; the interaction is direct. May interact with HSPA5. In terms of tissue distribution, expressed in kidney and small intestine.

Its subcellular location is the cell projection. It localises to the microvillus. As part of the intermicrovillar adhesion complex/IMAC plays a role in epithelial brush border differentiation, controlling microvilli organization and length. Plays a role in assembly of the complex. May play a role in cellular response to endoplasmic reticulum stress. The polypeptide is Ankyrin repeat and SAM domain-containing protein 4B (Homo sapiens (Human)).